Here is a 1070-residue protein sequence, read N- to C-terminus: DNA-directed RNA polymerase subunit beta (1070 aa).

Belongs to the RNA polymerase beta chain family. In terms of assembly, in plastids the minimal PEP RNA polymerase catalytic core is composed of four subunits: alpha, beta, beta', and beta''. When a (nuclear-encoded) sigma factor is associated with the core the holoenzyme is formed, which can initiate transcription.

The protein resides in the plastid. It is found in the chloroplast. It catalyses the reaction RNA(n) + a ribonucleoside 5'-triphosphate = RNA(n+1) + diphosphate. In terms of biological role, DNA-dependent RNA polymerase catalyzes the transcription of DNA into RNA using the four ribonucleoside triphosphates as substrates. The chain is DNA-directed RNA polymerase subunit beta from Populus trichocarpa (Western balsam poplar).